Here is a 439-residue protein sequence, read N- to C-terminus: MLSLDQIPHHIRHGIVGSRLIQIRGRVTQVTGTLLKAVVPGVRIGELCYLRNPDNSLSLQAEVIGFAQHQALLIPLGEMYGISSNTEVSPTGTMHQVGVGEHLLGQVLDGLGQPFDGGHLPEPAAWYPVYQDAPAPMSRKLITTPLSLGIRVIDGLLTCGEGQRMGIFAAAGGGKSTLLASLIRSAEVDVTVLALIGERGREVREFIESDLGEEGLRKAVLVVATSDRPSMERAKAGFVATSIAEYFRDQGKRVLLLMDSVTRFARAQREIGLAAGEPPTRRGYPPSVFAALPRLMERAGQSSKGSITALYTVLVEGDDMTEPVADETRSILDGHIILSRKLAAANHYPAIDVLRSASRVMNQIVSKEHKTWAGDLRRLLAKYEEVELLLQIGEYQKGQDKEADQAIERMGAIRGWLCQGTHELSHFNETLNLLETLTQ.

Position 172–177 (172–177) interacts with ATP; that stretch reads GGGKST.

This sequence belongs to the ATPase alpha/beta chains family. T3SS ATPase subfamily. The core secretion machinery of the T3SS is composed of approximately 20 different proteins, including cytoplasmic components, a base, an export apparatus and a needle. This subunit is part of the cytosolic complex. Forms homohexamers.

It localises to the cytoplasm. It carries out the reaction ATP + H2O + cellular proteinSide 1 = ADP + phosphate + cellular proteinSide 2.. ATPase component of the type III secretion system (T3SS), also called injectisome, which is used to inject bacterial effector proteins into eukaryotic host cells. Acts as a molecular motor to provide the energy that is required for the export of proteins. Required for type III secretion apparatus (T3SA) formation, proper protein secretion, host cell invasion and virulence. May play a critical role in T3SS substrate recognition, disassembly of the effector/chaperone complex and unfolding of the effector in an ATP-dependent manner prior to secretion. The chain is Type 3 secretion system ATPase from Yersinia pseudotuberculosis serotype I (strain IP32953).